A 642-amino-acid chain; its full sequence is Cylicin-1 (642 aa).

Disordered stretches follow at residues 167–203 (NGEP…NLEY) and 284–607 (NCSQ…CEPF). Polar residues predominate over residues 191–203 (KTSNSTSETNLEY). 8 repeat units span residues 294–313 (LKTG…GSKD), 314–344 (AKKE…DSKD), 345–391 (GKKK…KKST), 392–432 (GSTG…SSKK), 433–464 (SKKD…SEGD), 465–500 (STGK…SDLG), 501–526 (VNKK…SKAG), and 527–543 (RRKN…DSSG). Residues 298–316 (GKKERDSDIDSGGSKDAKK) are compositionally biased toward basic and acidic residues. A compositionally biased stretch (basic residues) spans 317–330 (EGKKKGKRESRKKR). Over residues 353–364 (KKNEIKKKKDTD) the composition is skewed to basic and acidic residues. Residues 388–404 (KKSTGSTGSESVDSKST) are compositionally biased toward low complexity. Residues 405–416 (NKVKKQVKKGVM) show a composition bias toward basic residues. A compositionally biased stretch (basic and acidic residues) spans 428-440 (ASSKKSKKDEKKE). Residues 454-463 (STDADSESEG) are compositionally biased toward acidic residues. Basic and acidic residues predominate over residues 465 to 488 (STGKKNEKKDKKITKKGEKKDAKK). A compositionally biased stretch (low complexity) spans 513–523 (SFSDSTSDSYS). An 8 X approximate tandem repeats region spans residues 527–543 (RRKNVRRSDSESEDSSG).

In terms of assembly, interacts with proteins of spermatozoa head including ACTL7A, CCIN, FAM209 and SPACA1; the interactions may be necessary for proper acrosome attachment to the nuclear envelope. As to expression, testis.

Its subcellular location is the cytoplasm. The protein resides in the cytoskeleton. It localises to the perinuclear theca. It is found in the calyx. Its function is as follows. Plays a role in the establishment of normal sperm morphology during spermatogenesis and is required for acrosome attachment to the nuclear envelope. This Mus musculus (Mouse) protein is Cylicin-1.